Here is a 395-residue protein sequence, read N- to C-terminus: Flap endonuclease 1 (395 aa).

The N-domain stretch occupies residues 1 to 104 (MGIKHLYQII…GELAKRIARK (104 aa)). Asp34 lines the Mg(2+) pocket. Residues Arg47 and Arg70 each coordinate DNA. Mg(2+) is bound at residue Asp86. Positions 103–123 (RKQEAAEQHEEAKETGTTEDV) are disordered. The tract at residues 122-253 (DVEKFSRRTV…NTALKLIRDH (132 aa)) is I-domain. Mg(2+) contacts are provided by Glu158, Glu160, Asp179, and Asp181. Glu158 provides a ligand contact to DNA. Residues Gly231 and Asp233 each contribute to the DNA site. Asp233 provides a ligand contact to Mg(2+). Positions 341–349 (QQSRLEGFF) are interaction with PCNA. The span at 356-389 (DEEKASLKRKHEEKLEAAKKKKKEDAKAKREAKS) shows a compositional bias: basic and acidic residues. The disordered stretch occupies residues 356 to 395 (DEEKASLKRKHEEKLEAAKKKKKEDAKAKREAKSRPKGTA).

Belongs to the XPG/RAD2 endonuclease family. FEN1 subfamily. As to quaternary structure, interacts with PCNA. Three molecules of FEN1 bind to one PCNA trimer with each molecule binding to one PCNA monomer. PCNA stimulates the nuclease activity without altering cleavage specificity. The cofactor is Mg(2+). In terms of processing, phosphorylated. Phosphorylation upon DNA damage induces relocalization to the nuclear plasma.

The protein localises to the nucleus. It localises to the nucleolus. Its subcellular location is the nucleoplasm. The protein resides in the mitochondrion. Its function is as follows. Structure-specific nuclease with 5'-flap endonuclease and 5'-3' exonuclease activities involved in DNA replication and repair. During DNA replication, cleaves the 5'-overhanging flap structure that is generated by displacement synthesis when DNA polymerase encounters the 5'-end of a downstream Okazaki fragment. It enters the flap from the 5'-end and then tracks to cleave the flap base, leaving a nick for ligation. Also involved in the long patch base excision repair (LP-BER) pathway, by cleaving within the apurinic/apyrimidinic (AP) site-terminated flap. Acts as a genome stabilization factor that prevents flaps from equilibrating into structures that lead to duplications and deletions. Also possesses 5'-3' exonuclease activity on nicked or gapped double-stranded DNA, and exhibits RNase H activity. Also involved in replication and repair of rDNA and in repairing mitochondrial DNA. In Uncinocarpus reesii (strain UAMH 1704), this protein is Flap endonuclease 1.